Reading from the N-terminus, the 419-residue chain is Cysteine desulfurase (419 aa).

Pyridoxal 5'-phosphate-binding positions include 69 to 70, Asn-157, Gln-185, and 205 to 207; these read AT and SAH. Lys-208 is modified (N6-(pyridoxal phosphate)lysine). Residue Thr-245 coordinates pyridoxal 5'-phosphate. The active-site Cysteine persulfide intermediate is the Cys-333. Cys-333 serves as a coordination point for [2Fe-2S] cluster. The segment at 392-419 is disordered; sequence TPIQDEVRDDNRASSNSLNRGSAASKES. A compositionally biased stretch (polar residues) spans 404 to 413; that stretch reads ASSNSLNRGS.

Belongs to the class-V pyridoxal-phosphate-dependent aminotransferase family. NifS/IscS subfamily. Homodimer. It depends on pyridoxal 5'-phosphate as a cofactor.

It carries out the reaction (sulfur carrier)-H + L-cysteine = (sulfur carrier)-SH + L-alanine. Catalyzes the removal of elemental sulfur atoms from cysteine to produce alanine. Seems to participate in the biosynthesis of the nitrogenase metalloclusters by providing the inorganic sulfur required for the Fe-S core formation. The polypeptide is Cysteine desulfurase (Frankia sp. (strain EuIK1)).